Reading from the N-terminus, the 384-residue chain is uncharacterized protein (384 aa).

A disordered region spans residues 1–116 (MTEMPKKKFS…FPAAPPPMDS (116 aa)). 2 stretches are compositionally biased toward basic and acidic residues: residues 14 to 70 (ARGD…RAGD) and 78 to 95 (RFKD…DRPR). 3 residues coordinate S-adenosyl-L-methionine: glycine 318, isoleucine 338, and leucine 347.

It belongs to the class IV-like SAM-binding methyltransferase superfamily. RNA methyltransferase TrmH family.

This is an uncharacterized protein from Synechocystis sp. (strain ATCC 27184 / PCC 6803 / Kazusa).